Consider the following 111-residue polypeptide: Universal stress protein B (111 aa).

The next 2 membrane-spanning stretches (helical) occupy residues 1–21 (MINTVALFWALFIVCVVNMLR) and 90–110 (FILTSALCGLVVVALIALMLW).

It belongs to the universal stress protein B family.

Its subcellular location is the cell inner membrane. This chain is Universal stress protein B, found in Edwardsiella ictaluri (strain 93-146).